The sequence spans 835 residues: Microcephalin (835 aa).

The BRCT 1 domain occupies 1-93 (MAAPILKDVV…AHIDESLFPA (93 aa)). A phosphoserine mark is found at Ser-279, Ser-287, Ser-296, and Ser-333. Disordered stretches follow at residues 313–381 (PDQK…RRSI) and 419–443 (DNLK…AQLS). Thr-335 carries the phosphothreonine modification. Basic residues predominate over residues 343–361 (LLIHSRPRSSSVKRKRVSH). Positions 434–443 (QLPSSPAQLS) are enriched in polar residues. Residue Ser-548 is modified to Phosphoserine. A disordered region spans residues 555-584 (AVGLKSTQNKGTTSKISNSSEGEAQSEHEP). The segment covering 559 to 577 (KSTQNKGTTSKISNSSEGE) has biased composition (polar residues). 2 consecutive BRCT domains span residues 640 to 730 (SGRG…PFEL) and 751 to 833 (YRGT…NYLL).

As to quaternary structure, interacts with CDC27 and maybe other components of the APC/C complex. Interacts with histone variant H2AX under DNA damage conditions. As to expression, expressed in fetal brain, liver and kidney.

Its subcellular location is the cytoplasm. It localises to the cytoskeleton. It is found in the microtubule organizing center. The protein resides in the centrosome. In terms of biological role, implicated in chromosome condensation and DNA damage induced cellular responses. May play a role in neurogenesis and regulation of the size of the cerebral cortex. This is Microcephalin from Homo sapiens (Human).